A 348-amino-acid polypeptide reads, in one-letter code: Abnormal cell lineage protein 44 (348 aa).

A signal peptide spans 1 to 25 (MRAAPFDFFFQSTALSTFFILCSLA). Disulfide bonds link C91–C102, C141–C149, C151–C165, C213–C227, C215–C222, C272–C299, C282–C294, C298–C338, C314–C329, C316–C326, and C321–C322. S219 is lipidated: O-palmitoleoyl serine; by mom-1. An N-linked (GlcNAc...) asparagine glycan is attached at N286.

Belongs to the Wnt family. In terms of processing, palmitoleoylation is required for efficient binding to frizzled receptors. Depalmitoleoylation leads to Wnt signaling pathway inhibition. In terms of tissue distribution, expressed in the tail hypodermis.

It localises to the secreted. It is found in the extracellular space. The protein resides in the extracellular matrix. Its function is as follows. Ligand for members of the frizzled family of seven transmembrane receptors. Affects male tail development, vulval precursor cell specification and egg laying. Involved in morphogenesis by influencing polarity of asymmetric cell divisions of the B, U, and F cells in the male, and the T cell in males and hermaphrodites. Controls spindle orientation in B-gamma cell division during male copulatory spicule development. Involved in specification of the P7.p lineage during vulval development. Has a role in providing polarity and default lin-17 localization in axon development and positioning of neuromuscular synapses in DA9 regions by negatively regulating synaptogenesis. Plays a role in motorneuron development by promoting the extension of the anterior neurite of ventral D-type GABAergic motorneurons along the anterior-posterior axis of the ventral nerve cord. Positively regulates cilium position and dendrite morphogenesis in postembryonic PQR gas-sensing neurons. This is likely through regulating the localization of grdn-1 to the distal dendrites of PQR sensory neurons. This chain is Abnormal cell lineage protein 44, found in Caenorhabditis elegans.